The chain runs to 49 residues: Feruloyl esterase A (49 aa).

This sequence belongs to the AB hydrolase superfamily. FaeA family.

The protein resides in the secreted. It catalyses the reaction feruloyl-polysaccharide + H2O = ferulate + polysaccharide.. In terms of biological role, involved in degradation of plant cell walls. Hydrolyzes the feruloyl-arabinose ester bond in arabinoxylans as well as the feruloyl-galactose and feruloyl-arabinose ester bonds in pectin. Active against methyl esters of sinapate (MSA), but not caffeate (MCA). In Talaromyces stipitatus (strain ATCC 10500 / CBS 375.48 / QM 6759 / NRRL 1006) (Penicillium stipitatum), this protein is Feruloyl esterase A.